Consider the following 144-residue polypeptide: Maximins 4/H3 type 1 (144 aa).

The first 18 residues, 1 to 18 (MNFKYIIAVSFFIASAYA), serve as a signal peptide directing secretion. Residues 19–43 (RSEEKDVQSLSQRDVLEEESLREIR) constitute a propeptide that is removed on maturation. At Asn70 the chain carries Asparagine amide. Positions 74 to 123 (TAEDHEVMKRLEAVMRDLDSLDHPEEASERETRGFNQEEIANLFTKKEKR) are excised as a propeptide. Ile143 bears the Isoleucine amide mark.

This sequence belongs to the bombinin family. Expressed by the skin glands.

It localises to the secreted. Maximin-4 shows antibacterial activity against both Gram-positive and Gram-negative bacteria. It also shows antimicrobial activity against the fungus C.albicans, but not against A.flavus nor P.uticale. It has little hemolytic activity. It does not possess a significant cytotoxicity against tumor cell lines. It does not possess a significant anti-HIV activity. In terms of biological role, maximin-H3 shows antibacterial activity against both Gram-positive and Gram-negative bacteria. It also shows antimicrobial activity against the fungus C.albicans. Shows strong hemolytic activity. This chain is Maximins 4/H3 type 1, found in Bombina maxima (Giant fire-bellied toad).